Consider the following 892-residue polypeptide: Alanine--tRNA ligase (892 aa).

Positions 565, 569, 678, and 682 each coordinate Zn(2+). A disordered region spans residues 857–876 (GGKGGGGRPDMAQAGGPDGA).

Belongs to the class-II aminoacyl-tRNA synthetase family. Zn(2+) is required as a cofactor.

It localises to the cytoplasm. It catalyses the reaction tRNA(Ala) + L-alanine + ATP = L-alanyl-tRNA(Ala) + AMP + diphosphate. Functionally, catalyzes the attachment of alanine to tRNA(Ala) in a two-step reaction: alanine is first activated by ATP to form Ala-AMP and then transferred to the acceptor end of tRNA(Ala). Also edits incorrectly charged Ser-tRNA(Ala) and Gly-tRNA(Ala) via its editing domain. In Bradyrhizobium diazoefficiens (strain JCM 10833 / BCRC 13528 / IAM 13628 / NBRC 14792 / USDA 110), this protein is Alanine--tRNA ligase.